Reading from the N-terminus, the 738-residue chain is Polyribonucleotide nucleotidyltransferase (738 aa).

Residues Asp514 and Asp520 each coordinate Mg(2+). Residues 580 to 639 enclose the KH domain; that stretch reads PRIITVKIPVDKIGEVIGPKGKMINQIQEDTGAEITIEDDGTIYIGAQVGSQAEAARATI. In terms of domain architecture, S1 motif spans 651–723; that stretch reads GERYLGTVVK…SRGKLSLIPV (73 aa).

This sequence belongs to the polyribonucleotide nucleotidyltransferase family. It depends on Mg(2+) as a cofactor.

The protein localises to the cytoplasm. It carries out the reaction RNA(n+1) + phosphate = RNA(n) + a ribonucleoside 5'-diphosphate. Its function is as follows. Involved in mRNA degradation. Catalyzes the phosphorolysis of single-stranded polyribonucleotides processively in the 3'- to 5'-direction. The polypeptide is Polyribonucleotide nucleotidyltransferase (Streptomyces avermitilis (strain ATCC 31267 / DSM 46492 / JCM 5070 / NBRC 14893 / NCIMB 12804 / NRRL 8165 / MA-4680)).